The following is a 294-amino-acid chain: Nucleotide-binding protein CLD_1131 (294 aa).

8–15 (GLSGAGKT) is an ATP binding site. Residue 59–62 (DIRG) coordinates GTP.

The protein belongs to the RapZ-like family.

Functionally, displays ATPase and GTPase activities. The polypeptide is Nucleotide-binding protein CLD_1131 (Clostridium botulinum (strain Okra / Type B1)).